We begin with the raw amino-acid sequence, 344 residues long: tRNA N6-adenosine threonylcarbamoyltransferase (344 aa).

Positions 111 and 115 each coordinate Fe cation. Substrate is bound by residues 134 to 138, D167, G180, and N273; that span reads LVSGG. Residue D301 coordinates Fe cation.

The protein belongs to the KAE1 / TsaD family. Fe(2+) serves as cofactor.

The protein localises to the cytoplasm. It catalyses the reaction L-threonylcarbamoyladenylate + adenosine(37) in tRNA = N(6)-L-threonylcarbamoyladenosine(37) in tRNA + AMP + H(+). Required for the formation of a threonylcarbamoyl group on adenosine at position 37 (t(6)A37) in tRNAs that read codons beginning with adenine. Is involved in the transfer of the threonylcarbamoyl moiety of threonylcarbamoyl-AMP (TC-AMP) to the N6 group of A37, together with TsaE and TsaB. TsaD likely plays a direct catalytic role in this reaction. In Cupriavidus taiwanensis (strain DSM 17343 / BCRC 17206 / CCUG 44338 / CIP 107171 / LMG 19424 / R1) (Ralstonia taiwanensis (strain LMG 19424)), this protein is tRNA N6-adenosine threonylcarbamoyltransferase.